The following is a 324-amino-acid chain: dITP/XTP pyrophosphatase (324 aa).

Positions 1-127 are unknown; sequence MTKTIFESKT…KNDNNFGDTI (127 aa). The segment at 128–324 is NTP pyrophosphatase; that stretch reads LIATHNEGKT…EVFPKWQLEN (197 aa). 131 to 136 is a substrate binding site; that stretch reads THNEGK. Residues Glu164 and Asp193 each contribute to the Mg(2+) site. Residue Asp193 is the Proton acceptor of the active site. Residues Ser194, 277–280, Lys300, and 305–306 contribute to the substrate site; these read FGYD and HR.

Belongs to the HAM1 NTPase family. As to quaternary structure, homodimer. It depends on Mg(2+) as a cofactor.

It carries out the reaction XTP + H2O = XMP + diphosphate + H(+). The catalysed reaction is dITP + H2O = dIMP + diphosphate + H(+). The enzyme catalyses ITP + H2O = IMP + diphosphate + H(+). Pyrophosphatase that catalyzes the hydrolysis of nucleoside triphosphates to their monophosphate derivatives, with a high preference for the non-canonical purine nucleotides XTP (xanthosine triphosphate), dITP (deoxyinosine triphosphate) and ITP. Seems to function as a house-cleaning enzyme that removes non-canonical purine nucleotides from the nucleotide pool, thus preventing their incorporation into DNA/RNA and avoiding chromosomal lesions. The chain is dITP/XTP pyrophosphatase from Streptococcus agalactiae serotype III (strain NEM316).